The chain runs to 283 residues: Protein-S-isoprenylcysteine O-methyltransferase (283 aa).

Over 1–15 (MAAARRGSAGSEARL) the chain is Cytoplasmic. A helical membrane pass occupies residues 16–32 (SLATFLLGASVLALPLL). At 33-40 (TRAGLQGR) the chain is on the lumenal side. The chain crosses the membrane as a helical span at residues 41–58 (TGLALYVAGLNALLLLLY). The Cytoplasmic portion of the chain corresponds to 59-68 (RPPRYQIAIR). The chain crosses the membrane as a helical span at residues 69–86 (ACFLGFVFGCGVLLSFSQ). Residues 87-91 (SSWNH) lie on the Lumenal side of the membrane. The helical transmembrane segment at 92–111 (FGWYVCSLSLFHYSEYLVTA) threads the bilayer. Over 112–130 (VNNPKSLSLDSFLLNHSLE) the chain is Cytoplasmic. Residues 131-148 (YTVAALSSWIEFTLENIF) form a helical membrane-spanning segment. The Lumenal portion of the chain corresponds to 149-153 (WPELK). Residues 154–173 (QITWLSATGLLMVVFGECLR) form a helical membrane-spanning segment. Residues 174 to 211 (KAAMFTAGSNFNHVVQSEKSDTHTLVTSGVYAWCRHPS) lie on the Cytoplasmic side of the membrane. S-adenosyl-L-methionine contacts are provided by residues Gln189, 196–199 (HTLV), Tyr204, and 209–212 (HPSY). The helical transmembrane segment at 212-227 (YVGWFYWSIGTQVMLC) threads the bilayer. Position 228 (Asn228) is a topological domain, lumenal. The helical transmembrane segment at 229–243 (PICGVVYALTVWRFF) threads the bilayer. The Cytoplasmic portion of the chain corresponds to 244–283 (RDRTEEEEISLIHFFGEEYLDYKKRVPTGLPFIKGVKVEL). Arg246 provides a ligand contact to substrate. An S-adenosyl-L-methionine-binding site is contributed by Glu250.

It belongs to the class VI-like SAM-binding methyltransferase superfamily. Isoprenylcysteine carboxyl methyltransferase family. Highly enriched in adult cerebellum, with a low level expression in other brain regions.

It localises to the endoplasmic reticulum membrane. It catalyses the reaction [protein]-C-terminal S-[(2E,6E)-farnesyl]-L-cysteine + S-adenosyl-L-methionine = [protein]-C-terminal S-[(2E,6E)-farnesyl]-L-cysteine methyl ester + S-adenosyl-L-homocysteine. Functionally, catalyzes the post-translational methylation of isoprenylated C-terminal cysteine residues. This is Protein-S-isoprenylcysteine O-methyltransferase (Icmt) from Mus musculus (Mouse).